The sequence spans 289 residues: Regulator of rDNA transcription protein 5 (289 aa).

The RRM domain occupies threonine 18–proline 105. The tract at residues threonine 235–threonine 289 is disordered. A compositionally biased stretch (pro residues) spans aspartate 239–valine 255. The segment covering serine 279–threonine 289 has biased composition (polar residues).

This sequence belongs to the RRT5 family.

May be involved in the modulation of rDNA transcription. The sequence is that of Regulator of rDNA transcription protein 5 (RRT5) from Saccharomyces cerevisiae (strain RM11-1a) (Baker's yeast).